Reading from the N-terminus, the 631-residue chain is Peptidyl-prolyl cis-trans isomerase CYP71 (631 aa).

Residues 26-45 (VEEEEPMVGPGPAPRGKRKR) form a disordered region. WD repeat units follow at residues 68–106 (MHRDVVTHVAVSAAEFFISGSMDGHLKFWKKKGVGIEFA), 111–150 (SHLGPIEGLAVSIDGLLCCTISNDHAVKIYDVVNYDMMAM), 201–240 (IHMNPIKVMKYNPVSDTMISGDTKGIIEYWSATTLQFPED), and 257–297 (KCKT…RRVY). A PPIase cyclophilin-type domain is found at 474–628 (LPENVIMHTT…QDVKILNVTV (155 aa)).

This sequence belongs to the cyclophilin-type PPIase family. In terms of assembly, interacts with FAS1 and LHP1. Interacts (via WD repeat domain) with histone H3. As to expression, ubiquitous. Expressed in the meristems.

It localises to the nucleus. The enzyme catalyses [protein]-peptidylproline (omega=180) = [protein]-peptidylproline (omega=0). Its function is as follows. PPIases accelerate the folding of proteins. It catalyzes the cis-trans isomerization of proline imidic peptide bonds in oligopeptides. Histone proline isomerase that increases the rate of cis-trans isomerization of the synthetic histone H3 peptides H3P30 (RKSAP30F-p-nitroanilide) and H3P30K27me3 (RKme3-SAP30F-p-nitroanilide) in the histone H3 N-terminal tail, in vitro. Histone remodeling factor involved in chromatin-based gene silencing. Reinforces H3K27 methylation. Involved in fundamental processes of chromatin assembly and histone modification by mediating the targeting of FAS1 and LHP1 on the chromatin. Required for the formation and development of leaves, for normal phyllotaxy and for the formation, maintenance and activity of root and shoot apical meristems. The sequence is that of Peptidyl-prolyl cis-trans isomerase CYP71 from Arabidopsis thaliana (Mouse-ear cress).